We begin with the raw amino-acid sequence, 788 residues long: Pre-rRNA-processing protein TSR1 homolog (788 aa).

Residues 1 to 40 (MSTTGHRAGVFKKPAKPHKSWKGKRTKGEITTENRGREGV) are disordered. Residues 9-25 (GVFKKPAKPHKSWKGKR) are compositionally biased toward basic residues. Over residues 26 to 40 (TKGEITTENRGREGV) the composition is skewed to basic and acidic residues. The Bms1-type G domain maps to 83–243 (APCLVTILSL…LRTLNETKKK (161 aa)). The tract at residues 354-433 (LEEADKEMRR…ASEMMFHDEI (80 aa)) is disordered. Residues 378 to 412 (DDSEDDEDEEDEDEDMDDEEEDKDLEEDDEEEDTP) are compositionally biased toward acidic residues.

The protein belongs to the TRAFAC class translation factor GTPase superfamily. Bms1-like GTPase family. TSR1 subfamily.

It is found in the nucleus. Its subcellular location is the nucleolus. Required during maturation of the 40S ribosomal subunit in the nucleolus. This is Pre-rRNA-processing protein TSR1 homolog from Caenorhabditis briggsae.